A 106-amino-acid chain; its full sequence is Small ribosomal subunit protein uS10 (106 aa).

It belongs to the universal ribosomal protein uS10 family. As to quaternary structure, part of the 30S ribosomal subunit.

Functionally, involved in the binding of tRNA to the ribosomes. The polypeptide is Small ribosomal subunit protein uS10 (Prochlorococcus marinus (strain MIT 9301)).